We begin with the raw amino-acid sequence, 984 residues long: Ephrin type-B receptor 1 (984 aa).

The N-terminal stretch at methionine 1–alanine 17 is a signal peptide. Residues methionine 18 to proline 540 are Extracellular-facing. Residues glutamate 19–glutamine 201 enclose the Eph LBD domain. Fibronectin type-III domains follow at residues valine 322–alanine 432 and alanine 433–aspartate 528. Residues asparagine 334, asparagine 426, and asparagine 480 are each glycosylated (N-linked (GlcNAc...) asparagine). Residues leucine 541–cysteine 563 form a helical membrane-spanning segment. Over serine 564–alanine 984 the chain is Cytoplasmic. At tyrosine 600 the chain carries Phosphotyrosine. Positions valine 619–isoleucine 882 constitute a Protein kinase domain. ATP contacts are provided by residues isoleucine 625–valine 633 and lysine 651. Aspartate 744 acts as the Proton acceptor in catalysis. Residues threonine 911 to glutamine 975 enclose the SAM domain. A Phosphotyrosine; by autocatalysis modification is found at tyrosine 928. Residues alanine 982–alanine 984 carry the PDZ-binding motif.

The protein belongs to the protein kinase superfamily. Tyr protein kinase family. Ephrin receptor subfamily. In terms of assembly, heterotetramer upon binding of the ligand. The heterotetramer is composed of an ephrin dimer and a receptor dimer. Oligomerization is probably required to induce biological responses. Interacts with EPHB6; transphosphorylates EPHB6 to form an active signaling complex. Interacts with PICK1. Interacts (through Tyr-594) with NCK1 (via SH2 domain); activates the JUN cascade to regulate cell adhesion. The ligand-activated form interacts (through Tyr-928) with GRB7 and GRB10 (via SH2 domains). The ligand-activated form interacts (residues within the catalytic domain) with GRB2 (via SH2 domain). Interacts with GRB2, SHC1 and SRC; activates the MAPK/ERK cascade to regulate cell migration. Interacts with CBL; regulates receptor degradation through ubiquitination. Interacts with ACP1. In terms of processing, phosphorylated. Autophosphorylation is stimulated by the ligand EFNB1. Required for interaction with SH2 domain-containing interactors, for activation of the MAPK/ERK and JUN signaling cascades and for ubiquitination by CBL. Ubiquitinated; (EFNB1)ligand-induced poly- and/or multi-ubiquitination by CBL is regulated by SRC and leads to lysosomal degradation. In terms of tissue distribution, preferentially expressed in brain.

It is found in the cell membrane. Its subcellular location is the early endosome membrane. The protein localises to the cell projection. The protein resides in the dendrite. The enzyme catalyses L-tyrosyl-[protein] + ATP = O-phospho-L-tyrosyl-[protein] + ADP + H(+). Functionally, receptor tyrosine kinase which binds promiscuously transmembrane ephrin-B family ligands residing on adjacent cells, leading to contact-dependent bidirectional signaling into neighboring cells. The signaling pathway downstream of the receptor is referred to as forward signaling while the signaling pathway downstream of the ephrin ligand is referred to as reverse signaling. Cognate/functional ephrin ligands for this receptor include EFNB1, EFNB2 and EFNB3. During nervous system development, regulates retinal axon guidance redirecting ipsilaterally ventrotemporal retinal ganglion cells axons at the optic chiasm midline. This probably requires repulsive interaction with EFNB2. In the adult nervous system together with EFNB3, regulates chemotaxis, proliferation and polarity of the hippocampus neural progenitors. In addition to its role in axon guidance also plays an important redundant role with other ephrin-B receptors in development and maturation of dendritic spines and synapse formation. May also regulate angiogenesis. More generally, may play a role in targeted cell migration and adhesion. Upon activation by EFNB1 and probably other ephrin-B ligands activates the MAPK/ERK and the JNK signaling cascades to regulate cell migration and adhesion respectively. Involved in the maintenance of the pool of satellite cells (muscle stem cells) by promoting their self-renewal and reducing their activation and differentiation. This is Ephrin type-B receptor 1 (EPHB1) from Homo sapiens (Human).